Reading from the N-terminus, the 712-residue chain is Polyribonucleotide nucleotidyltransferase (712 aa).

Positions 493 and 499 each coordinate Mg(2+). The KH domain maps to 560–622 (PRLTKLTIDP…RDAEAAIERI (63 aa)). In terms of domain architecture, S1 motif spans 632–700 (GEDYVGTVKG…DDGKMRLTRK (69 aa)).

Belongs to the polyribonucleotide nucleotidyltransferase family. It depends on Mg(2+) as a cofactor.

The protein localises to the cytoplasm. The enzyme catalyses RNA(n+1) + phosphate = RNA(n) + a ribonucleoside 5'-diphosphate. Its function is as follows. Involved in mRNA degradation. Catalyzes the phosphorolysis of single-stranded polyribonucleotides processively in the 3'- to 5'-direction. The chain is Polyribonucleotide nucleotidyltransferase from Salinibacter ruber (strain DSM 13855 / M31).